Here is a 584-residue protein sequence, read N- to C-terminus: J protein JJJ2 (584 aa).

The region spanning 13 to 77 (TYYSILGLTS…DQKLRYDRDL (65 aa)) is the J domain. The disordered stretch occupies residues 216 to 312 (YSEDPNSCLG…FSSGSHDSNL (97 aa)). Serine 229 carries the phosphoserine modification. Over residues 241-253 (QQQQQQQQQQQQQ) the composition is skewed to low complexity. Over residues 269–282 (KDNKESKRESRVSP) the composition is skewed to basic and acidic residues. The span at 299–312 (KTSTFSSGSHDSNL) shows a compositional bias: polar residues.

The protein resides in the cytoplasm. Its subcellular location is the nucleus. The chain is J protein JJJ2 (JJJ2) from Saccharomyces cerevisiae (strain YJM789) (Baker's yeast).